Reading from the N-terminus, the 335-residue chain is tRNA N6-adenosine threonylcarbamoyltransferase (335 aa).

3 residues coordinate a divalent metal cation: His-109, His-113, and Tyr-130. Residues Tyr-130–Gly-134, Asp-162, Gly-177, Glu-181, and Asn-266 contribute to the substrate site. Asp-294 lines the a divalent metal cation pocket.

Belongs to the KAE1 / TsaD family. Component of the EKC/KEOPS complex composed of at least tp53rk, tprkb, osgep and lage3; the whole complex dimerizes. Requires a divalent metal cation as cofactor.

The protein resides in the cytoplasm. The protein localises to the nucleus. The catalysed reaction is L-threonylcarbamoyladenylate + adenosine(37) in tRNA = N(6)-L-threonylcarbamoyladenosine(37) in tRNA + AMP + H(+). Functionally, component of the EKC/KEOPS complex that is required for the formation of a threonylcarbamoyl group on adenosine at position 37 (t(6)A37) in tRNAs that read codons beginning with adenine. The complex is probably involved in the transfer of the threonylcarbamoyl moiety of threonylcarbamoyl-AMP (TC-AMP) to the N6 group of A37. OSGEP likely plays a direct catalytic role in this reaction, but requires other protein(s) of the complex to fulfill this activity. The polypeptide is tRNA N6-adenosine threonylcarbamoyltransferase (Danio rerio (Zebrafish)).